Reading from the N-terminus, the 404-residue chain is E3 ubiquitin-protein ligase RNF128 (404 aa).

Residues 1–31 (MGALKMRCQCFPLPYLSLLALLLLNLSLTRA) form the signal peptide. The 105-residue stretch at 62 to 166 (DSPIERAAGL…LKGNEIVDLI (105 aa)) folds into the PA domain. The helical transmembrane segment at 191–211 (IFFVSVSFFIVTAATVGYFIF) threads the bilayer. An RING-type; atypical zinc finger spans residues 260 to 301 (CAVCIEPYKPSDVVRILTCNHFFHKNCIDPWLLEHRTCPMCK). The interval 336 to 356 (ITEEENHSETASSGYASVRGG) is disordered.

Post-translationally, auto-ubiquitinated. In terms of tissue distribution, expressed in the cement gland, cranial placodes, and the pronephros.

It is found in the endomembrane system. It localises to the cytoplasm. The protein localises to the perinuclear region. The enzyme catalyses S-ubiquitinyl-[E2 ubiquitin-conjugating enzyme]-L-cysteine + [acceptor protein]-L-lysine = [E2 ubiquitin-conjugating enzyme]-L-cysteine + N(6)-ubiquitinyl-[acceptor protein]-L-lysine.. It functions in the pathway protein modification; protein ubiquitination. Its function is as follows. E3 ubiquitin-protein ligase that catalyzes polyubiquitin chains. Converts epidermis into cement gland and neural tissue in whole embryos. This Xenopus laevis (African clawed frog) protein is E3 ubiquitin-protein ligase RNF128 (rnf128).